We begin with the raw amino-acid sequence, 209 residues long: Large ribosomal subunit protein uL3 (209 aa).

Residues 124–156 (KRHNFSGGQRTHGQSDRQRAPGSVGGSSDPSRV) are disordered.

The protein belongs to the universal ribosomal protein uL3 family. As to quaternary structure, part of the 50S ribosomal subunit. Forms a cluster with proteins L14 and L19.

In terms of biological role, one of the primary rRNA binding proteins, it binds directly near the 3'-end of the 23S rRNA, where it nucleates assembly of the 50S subunit. This Pelodictyon phaeoclathratiforme (strain DSM 5477 / BU-1) protein is Large ribosomal subunit protein uL3.